A 213-amino-acid chain; its full sequence is Receptor-binding cancer antigen expressed on SiSo cells (213 aa).

The Extracellular segment spans residues methionine 1–phenylalanine 6. A helical; Signal-anchor for type III membrane protein membrane pass occupies residues arginine 7 to cysteine 27. Residues arginine 28–serine 213 are Cytoplasmic-facing. Serine 36 is subject to Phosphoserine. Threonine 41 is modified (phosphothreonine). Tyrosine 94 is subject to Phosphotyrosine. The stretch at glutamate 163–lysine 211 forms a coiled coil. Basic and acidic residues predominate over residues alanine 179–asparagine 206. The interval alanine 179 to serine 213 is disordered.

Homodimer.

It localises to the golgi apparatus membrane. Its function is as follows. May participate in suppression of cell proliferation and induces apoptotic cell death through activation of interleukin-1-beta converting enzyme (ICE)-like proteases. This is Receptor-binding cancer antigen expressed on SiSo cells (EBAG9) from Canis lupus familiaris (Dog).